We begin with the raw amino-acid sequence, 328 residues long: Phenylalanine--tRNA ligase alpha subunit (328 aa).

This sequence belongs to the class-II aminoacyl-tRNA synthetase family. Phe-tRNA synthetase alpha subunit type 1 subfamily. As to quaternary structure, tetramer of two alpha and two beta subunits. Mg(2+) serves as cofactor.

It localises to the cytoplasm. The enzyme catalyses tRNA(Phe) + L-phenylalanine + ATP = L-phenylalanyl-tRNA(Phe) + AMP + diphosphate + H(+). The chain is Phenylalanine--tRNA ligase alpha subunit from Buchnera aphidicola subsp. Baizongia pistaciae (strain Bp).